A 273-amino-acid polypeptide reads, in one-letter code: Replication factor A protein 2 (273 aa).

Polar residues predominate over residues 1–13; sequence MATYQPYNEYSSV. Residues 1–38 form a disordered region; it reads MATYQPYNEYSSVTGGGFENSESRPGSGESETNTRVNT. Ser27 bears the Phosphoserine mark. The segment covering 29 to 38 has biased composition (polar residues); the sequence is ESETNTRVNT. The OB DNA-binding region spans 69-157; sequence VCFVGVVRNI…NIQYAVIKPI (89 aa). The residue at position 122 (Ser122) is a Phosphoserine.

Belongs to the replication factor A protein 2 family. In terms of assembly, heterotrimer of 69, 36, and 13 kDa chains. The DNA-binding activity may reside exclusively on the 69 kDa subunit. Interacts with MCM10. In terms of processing, phosphorylated in a cell cycle-dependent manner with phosphorylation increasing at the entry in S phase and dephosphorylation occurring at mitosis. The N-terminus is blocked.

The protein localises to the nucleus. Functionally, binds to single-stranded sequences participating in DNA replication in addition to those mediating transcriptional repression (URS1) and activation (CAR1). Stimulates the activity of a cognate strand exchange protein (SEP1). It cooperates with T-AG and DNA topoisomerase I to unwind template DNA containing the simian virus 40 origin of DNA replication. This chain is Replication factor A protein 2 (RFA2), found in Saccharomyces cerevisiae (strain ATCC 204508 / S288c) (Baker's yeast).